The chain runs to 189 residues: Copper transport protein CTR2 (189 aa).

Topologically, residues 1 to 81 are cytoplasmic; the sequence is MDDKKTWSTV…VVFEWWHIKT (81 aa). A helical transmembrane segment spans residues 82-102; that stretch reads LPGLILSCLAIFGLAYLYEYL. At 103 to 142 the chain is on the vacuolar side; it reads KYCVHKRQLSQRVLLPNRSLTKINQADKVSNSILYGLQVG. A helical transmembrane segment spans residues 143 to 163; the sequence is FSFMLMLVFMTYNGWLMLAVV. Topologically, residues 164–189 are cytoplasmic; the sequence is CGAIWGNYSWCTSYSPEIDDSSLACH.

Belongs to the copper transporter (Ctr) (TC 1.A.56) family. SLC31A subfamily. As to quaternary structure, homomultimer.

The protein resides in the vacuole membrane. Functionally, provides bioavailable copper via mobilization of vacuolar copper stores and export to the cytoplasm. The protein is Copper transport protein CTR2 (CTR2) of Saccharomyces cerevisiae (strain ATCC 204508 / S288c) (Baker's yeast).